We begin with the raw amino-acid sequence, 173 residues long: Crossover junction endodeoxyribonuclease RuvC (173 aa).

Catalysis depends on residues aspartate 8, glutamate 67, and aspartate 139. 3 residues coordinate Mg(2+): aspartate 8, glutamate 67, and aspartate 139.

It belongs to the RuvC family. Homodimer which binds Holliday junction (HJ) DNA. The HJ becomes 2-fold symmetrical on binding to RuvC with unstacked arms; it has a different conformation from HJ DNA in complex with RuvA. In the full resolvosome a probable DNA-RuvA(4)-RuvB(12)-RuvC(2) complex forms which resolves the HJ. It depends on Mg(2+) as a cofactor.

Its subcellular location is the cytoplasm. The enzyme catalyses Endonucleolytic cleavage at a junction such as a reciprocal single-stranded crossover between two homologous DNA duplexes (Holliday junction).. The RuvA-RuvB-RuvC complex processes Holliday junction (HJ) DNA during genetic recombination and DNA repair. Endonuclease that resolves HJ intermediates. Cleaves cruciform DNA by making single-stranded nicks across the HJ at symmetrical positions within the homologous arms, yielding a 5'-phosphate and a 3'-hydroxyl group; requires a central core of homology in the junction. The consensus cleavage sequence is 5'-(A/T)TT(C/G)-3'. Cleavage occurs on the 3'-side of the TT dinucleotide at the point of strand exchange. HJ branch migration catalyzed by RuvA-RuvB allows RuvC to scan DNA until it finds its consensus sequence, where it cleaves and resolves the cruciform DNA. The chain is Crossover junction endodeoxyribonuclease RuvC from Psychromonas ingrahamii (strain DSM 17664 / CCUG 51855 / 37).